Consider the following 169-residue polypeptide: Protein HIGH ARSENIC CONTENT 1, mitochondrial (169 aa).

A mitochondrion-targeting transit peptide spans 1–59 (MYTYSLLNLSHCRRQTRKKRKTDHTEGFLMEETKPKTVEDVETVDVYTAKGFLSTGHRY). The 94-residue stretch at 60–153 (LDVRTNEEFA…WVDAGFAGDK (94 aa)) folds into the Rhodanese domain. Residue Cys-113 is the Cysteine persulfide intermediate of the active site.

In terms of tissue distribution, expressed in root hairs, epidermal cells at the surface of the root and in the pericycle within the stele.

It localises to the mitochondrion. It carries out the reaction [glutaredoxin]-dithiol + arsenate + glutathione + H(+) = glutathionyl-S-S-[glutaredoxin] + arsenite + H2O. With respect to regulation, inhibited by trobenzenesulphonic acid (TNBS). In terms of biological role, arsenate reductase critical for arsenic tolerance. Reduces arsenate to arsenite in the root, facilitating efflux of arsenic back into the soil to limit both its accumulation in the root and transport to the shoot. Essential for arsenite efflux from the root, but not necessary for arsenate uptake. The chain is Protein HIGH ARSENIC CONTENT 1, mitochondrial from Arabidopsis thaliana (Mouse-ear cress).